Reading from the N-terminus, the 114-residue chain is UPF0102 protein Amet_2739 (114 aa).

This sequence belongs to the UPF0102 family.

The protein is UPF0102 protein Amet_2739 of Alkaliphilus metalliredigens (strain QYMF).